We begin with the raw amino-acid sequence, 436 residues long: 3-ketoacyl-CoA thiolase (436 aa).

The active-site Acyl-thioester intermediate is C99. Catalysis depends on proton acceptor residues H392 and C422.

This sequence belongs to the thiolase-like superfamily. Thiolase family. Heterotetramer of two alpha chains (FadJ) and two beta chains (FadI).

It localises to the cytoplasm. The catalysed reaction is an acyl-CoA + acetyl-CoA = a 3-oxoacyl-CoA + CoA. Its pathway is lipid metabolism; fatty acid beta-oxidation. Catalyzes the final step of fatty acid oxidation in which acetyl-CoA is released and the CoA ester of a fatty acid two carbons shorter is formed. In Cronobacter sakazakii (strain ATCC BAA-894) (Enterobacter sakazakii), this protein is 3-ketoacyl-CoA thiolase.